The sequence spans 525 residues: GMP synthase [glutamine-hydrolyzing] (525 aa).

In terms of domain architecture, Glutamine amidotransferase type-1 spans 8–207 (KILILDFGSQ…ALDICQCDAN (200 aa)). The active-site Nucleophile is the Cys-85. Active-site residues include His-181 and Glu-183. The region spanning 208 to 400 (WKPASIIEDA…LGLPYDMLYR (193 aa)) is the GMPS ATP-PPase domain. 235–241 (SGGVDSS) is an ATP binding site.

In terms of assembly, homodimer.

The catalysed reaction is XMP + L-glutamine + ATP + H2O = GMP + L-glutamate + AMP + diphosphate + 2 H(+). It functions in the pathway purine metabolism; GMP biosynthesis; GMP from XMP (L-Gln route): step 1/1. Functionally, catalyzes the synthesis of GMP from XMP. This chain is GMP synthase [glutamine-hydrolyzing], found in Shewanella woodyi (strain ATCC 51908 / MS32).